Here is a 338-residue protein sequence, read N- to C-terminus: Phosphate acyltransferase (338 aa).

The protein belongs to the PlsX family. As to quaternary structure, homodimer. Probably interacts with PlsY.

Its subcellular location is the cytoplasm. It carries out the reaction a fatty acyl-[ACP] + phosphate = an acyl phosphate + holo-[ACP]. It participates in lipid metabolism; phospholipid metabolism. Catalyzes the reversible formation of acyl-phosphate (acyl-PO(4)) from acyl-[acyl-carrier-protein] (acyl-ACP). This enzyme utilizes acyl-ACP as fatty acyl donor, but not acyl-CoA. In Alcanivorax borkumensis (strain ATCC 700651 / DSM 11573 / NCIMB 13689 / SK2), this protein is Phosphate acyltransferase.